A 442-amino-acid polypeptide reads, in one-letter code: Yes-associated protein homolog 1 (442 aa).

A compositionally biased stretch (basic residues) spans 1–10 (MASKSIHKKH). The segment at 1–84 (MASKSIHKKH…GSVDESSRTA (84 aa)) is disordered. Composition is skewed to polar residues over residues 13-22 (NSQQDKNQFS) and 55-71 (LPSS…SSAH). Position 104 is a phosphoserine (S104). The span at 108 to 120 (LHTSVNNGQSSAT) shows a compositional bias: polar residues. The tract at residues 108–136 (LHTSVNNGQSSATVPHPSHHNVHHQHSKS) is disordered. Over residues 124 to 134 (PSHHNVHHQHS) the composition is skewed to basic residues. In terms of domain architecture, WW spans 203 to 236 (LPMPQGWEMCYDSDGVRYFKDHNSKTTTWDDPRL).

The protein belongs to the YAP1 family. Highly divergent. In terms of assembly, interacts (via WW domain) with wts-1 (via N-terminus). Interacts (via WW domain) with egl-44; the interaction may regulate transcription. In terms of tissue distribution, expressed in epithelia, hypodermis, muscles, pharynx, intestine, gonadal sheath cells, vulva, spermatheca and in excretory tissue.

It localises to the cytoplasm. Its subcellular location is the nucleus. It is found in the cell projection. The protein resides in the cilium. The protein localises to the cytoskeleton. It localises to the cilium axoneme. Functionally, plays a role in thermal stress response and in aging. The sequence is that of Yes-associated protein homolog 1 from Caenorhabditis elegans.